We begin with the raw amino-acid sequence, 75 residues long: Small ribosomal subunit protein bS18 (75 aa).

It belongs to the bacterial ribosomal protein bS18 family. Part of the 30S ribosomal subunit. Forms a tight heterodimer with protein bS6.

Its function is as follows. Binds as a heterodimer with protein bS6 to the central domain of the 16S rRNA, where it helps stabilize the platform of the 30S subunit. This Ruegeria sp. (strain TM1040) (Silicibacter sp.) protein is Small ribosomal subunit protein bS18.